A 377-amino-acid chain; its full sequence is MPRPIEALIHPDALAHNLLQARRHAGDAKLWAVIKANAYGHGIERVWPALLGADGLAMLDLDEAQRVRNLGWRGPVLLLEGCFEARDLELCSRLNLWHVVHHDDQIGWLAAHKTHQPHRVFLKMNSGMNRLGFTPQALRSAWVRLNALPQVDEISLMTHFSDADSPRPGADGIAAQVARFVEATHDLPGERSLSNSAAILRHCERAEVRADWVRSGILSYGSSPDHPQHDIGHWNLRPAMTLRSRLIATQQLQAGDSVGYGSRFVAQQPMRIGIVACGYADGYPRHAPGDTGNATPVLVDGLRTHTVGRVSMDMLAVDLSELPAAGVGSEVTLWGHGPHGSLLPIDAVAQAAGTIGYELMCALAQRVPTHVQDLEPR.

Lys35 (proton acceptor; specific for D-alanine) is an active-site residue. Position 35 is an N6-(pyridoxal phosphate)lysine (Lys35). Position 130 (Arg130) interacts with substrate. The Proton acceptor; specific for L-alanine role is filled by Tyr260. Met312 provides a ligand contact to substrate.

The protein belongs to the alanine racemase family. Pyridoxal 5'-phosphate serves as cofactor.

It carries out the reaction L-alanine = D-alanine. Its pathway is amino-acid biosynthesis; D-alanine biosynthesis; D-alanine from L-alanine: step 1/1. Catalyzes the interconversion of L-alanine and D-alanine. May also act on other amino acids. The chain is Alanine racemase (alr) from Leptothrix cholodnii (strain ATCC 51168 / LMG 8142 / SP-6) (Leptothrix discophora (strain SP-6)).